A 566-amino-acid polypeptide reads, in one-letter code: Proline--tRNA ligase (566 aa).

The protein belongs to the class-II aminoacyl-tRNA synthetase family. ProS type 1 subfamily. As to quaternary structure, homodimer.

Its subcellular location is the cytoplasm. The catalysed reaction is tRNA(Pro) + L-proline + ATP = L-prolyl-tRNA(Pro) + AMP + diphosphate. In terms of biological role, catalyzes the attachment of proline to tRNA(Pro) in a two-step reaction: proline is first activated by ATP to form Pro-AMP and then transferred to the acceptor end of tRNA(Pro). As ProRS can inadvertently accommodate and process non-cognate amino acids such as alanine and cysteine, to avoid such errors it has two additional distinct editing activities against alanine. One activity is designated as 'pretransfer' editing and involves the tRNA(Pro)-independent hydrolysis of activated Ala-AMP. The other activity is designated 'posttransfer' editing and involves deacylation of mischarged Ala-tRNA(Pro). The misacylated Cys-tRNA(Pro) is not edited by ProRS. The polypeptide is Proline--tRNA ligase (Exiguobacterium sibiricum (strain DSM 17290 / CCUG 55495 / CIP 109462 / JCM 13490 / 255-15)).